Here is a 277-residue protein sequence, read N- to C-terminus: 3-methyl-2-oxobutanoate hydroxymethyltransferase (277 aa).

Mg(2+)-binding residues include Asp53 and Asp96. 3-methyl-2-oxobutanoate is bound by residues 53-54 (DS), Asp96, and Lys126. Glu128 contributes to the Mg(2+) binding site. The active-site Proton acceptor is the Glu195.

This sequence belongs to the PanB family. In terms of assembly, homodecamer; pentamer of dimers. Mg(2+) serves as cofactor.

It is found in the cytoplasm. It catalyses the reaction 3-methyl-2-oxobutanoate + (6R)-5,10-methylene-5,6,7,8-tetrahydrofolate + H2O = 2-dehydropantoate + (6S)-5,6,7,8-tetrahydrofolate. The protein operates within cofactor biosynthesis; (R)-pantothenate biosynthesis; (R)-pantoate from 3-methyl-2-oxobutanoate: step 1/2. Its function is as follows. Catalyzes the reversible reaction in which hydroxymethyl group from 5,10-methylenetetrahydrofolate is transferred onto alpha-ketoisovalerate to form ketopantoate. In Pelodictyon phaeoclathratiforme (strain DSM 5477 / BU-1), this protein is 3-methyl-2-oxobutanoate hydroxymethyltransferase.